The following is an 88-amino-acid chain: Sec-independent protein translocase protein TatA (88 aa).

Residues 1-21 (MGSIGWAQLLIIAVIVVLLFG) traverse the membrane as a helical segment. A disordered region spans residues 41-88 (KAMGDDSQTPPTNVDKTSNDADFAKSITEKQQPVAKAEESKSHEKEQG). Residues 46 to 56 (DSQTPPTNVDK) show a composition bias toward polar residues. A compositionally biased stretch (basic and acidic residues) spans 76 to 88 (KAEESKSHEKEQG).

The protein belongs to the TatA/E family. As to quaternary structure, the Tat system comprises two distinct complexes: a TatABC complex, containing multiple copies of TatA, TatB and TatC subunits, and a separate TatA complex, containing only TatA subunits. Substrates initially bind to the TatABC complex, which probably triggers association of the separate TatA complex to form the active translocon.

The protein localises to the cell inner membrane. Functionally, part of the twin-arginine translocation (Tat) system that transports large folded proteins containing a characteristic twin-arginine motif in their signal peptide across membranes. TatA could form the protein-conducting channel of the Tat system. The sequence is that of Sec-independent protein translocase protein TatA from Yersinia pestis.